Reading from the N-terminus, the 572-residue chain is Isocitrate lyase (572 aa).

Residue 104–106 (SGW) coordinates substrate. D175 contributes to the Mg(2+) binding site. The active-site Proton acceptor is C213. Residues 214–215 (GH), R250, 437–441 (NLSPS), and T472 each bind substrate. Residues 550–572 (QFKGSWTGPGSESSSHVLAKSRM) are disordered. The short motif at 570-572 (SRM) is the Microbody targeting signal element.

The protein belongs to the isocitrate lyase/PEP mutase superfamily. Isocitrate lyase family. Mg(2+) serves as cofactor. Expressed in leaves.

The protein resides in the glyoxysome. The catalysed reaction is D-threo-isocitrate = glyoxylate + succinate. It functions in the pathway carbohydrate metabolism; glyoxylate cycle; (S)-malate from isocitrate: step 1/2. In terms of biological role, involved in storage lipid mobilization during the growth of higher plant seedling. This chain is Isocitrate lyase, found in Oryza sativa subsp. japonica (Rice).